The chain runs to 335 residues: Protein-arginine N-acetylglucosaminyltransferase SseK3 (335 aa).

UDP-N-acetyl-alpha-D-glucosamine-binding positions include Q51–F53 and Y75. Residues R153 and R184 are each glycosylated (N-beta-linked (GlcNAc) arginine; by autocatalysis). Residue Y224–A227 coordinates UDP-N-acetyl-alpha-D-glucosamine. The DXD motif signature appears at D226 to D228. D228 is a Mn(2+) binding site. E258 acts as the Proton acceptor in catalysis. R305 carries N-beta-linked (GlcNAc) arginine; by autocatalysis glycosylation. Mn(2+) contacts are provided by D325 and S327. UDP-N-acetyl-alpha-D-glucosamine contacts are provided by residues S327 and S332–R335. N-beta-linked (GlcNAc) arginine; by autocatalysis glycosylation is present at R335.

This sequence belongs to the glycosyltransferase NleB family. As to quaternary structure, interacts with host TRIM32; without mediating its GlcNAcylation. The cofactor is Mn(2+). In terms of processing, auto-glycosylated: arginine GlcNAcylation is required for activity toward death domain-containing host target proteins.

Its subcellular location is the secreted. The protein resides in the host Golgi apparatus. The enzyme catalyses L-arginyl-[protein] + UDP-N-acetyl-alpha-D-glucosamine = N(omega)-(N-acetyl-beta-D-glucosaminyl)-L-arginyl-[protein] + UDP + H(+). Its function is as follows. Protein-arginine N-acetylglucosaminyltransferase effector that disrupts TNF signaling in infected cells, including NF-kappa-B signaling and apoptosis. Acts by catalyzing the transfer of a single N-acetylglucosamine (GlcNAc) to a conserved arginine residue in the death domain of host proteins such as TRADD, TNFRSF1A/TNFR1 and TNFRSF10B/TRAILR2: arginine GlcNAcylation prevents homotypic/heterotypic death domain interactions and assembly of the oligomeric TNF-alpha receptor complex, thereby disrupting TNF signaling. Also acts on host proteins without a death domain: catalyzes arginine GlcNAcylation of host small Rab GTPase (Rab1, Rab5 and Rab11), thereby preventing GTPase activity and leading to impaired host vesicular protein transport. Also mediates auto-GlcNAcylation, which is required for activity toward death domain-containing host target proteins. This Salmonella typhimurium (strain SL1344) protein is Protein-arginine N-acetylglucosaminyltransferase SseK3.